Consider the following 504-residue polypeptide: Glutamate--tRNA ligase (504 aa).

The short motif at 14–24 (PSPTGYLHVGG) is the 'HIGH' region element. The 'KMSKS' region signature appears at 261–265 (KLSKR). Lys-264 provides a ligand contact to ATP.

This sequence belongs to the class-I aminoacyl-tRNA synthetase family. Glutamate--tRNA ligase type 1 subfamily. As to quaternary structure, monomer.

The protein localises to the cytoplasm. It catalyses the reaction tRNA(Glu) + L-glutamate + ATP = L-glutamyl-tRNA(Glu) + AMP + diphosphate. In terms of biological role, catalyzes the attachment of glutamate to tRNA(Glu) in a two-step reaction: glutamate is first activated by ATP to form Glu-AMP and then transferred to the acceptor end of tRNA(Glu). This chain is Glutamate--tRNA ligase, found in Chlorobium luteolum (strain DSM 273 / BCRC 81028 / 2530) (Pelodictyon luteolum).